Reading from the N-terminus, the 149-residue chain is MAETFKIRKLEISDKRKGFIELLGQLTVTGSVTDEEFDRRFEEIRSYGDDHVICVIEEETSGKIAATGSVMIEKKFLRNCGKAGHIEDVVVDSRFRGKQLGKKVVEFLMDHCKSMGCYKVILDCSVENKVFYEKCGMSNKSIQMSKYFD.

Positions 5–149 (FKIRKLEISD…KSIQMSKYFD (145 aa)) constitute an N-acetyltransferase domain. Residues T27, 75 to 78 (KFLR), and 87 to 89 (EDV) each bind substrate. 97 to 102 (GKQLGK) contacts acetyl-CoA. Substrate is bound at residue 118-119 (YK). 132–134 (YEK) serves as a coordination point for acetyl-CoA.

The protein belongs to the acetyltransferase family. GNA1 subfamily. As to quaternary structure, homodimer. Expressed in roots, leaves, stems, cauline leaves, flowers and siliques.

It localises to the endoplasmic reticulum membrane. The enzyme catalyses D-glucosamine 6-phosphate + acetyl-CoA = N-acetyl-D-glucosamine 6-phosphate + CoA + H(+). It functions in the pathway nucleotide-sugar biosynthesis; UDP-N-acetyl-alpha-D-glucosamine biosynthesis; N-acetyl-alpha-D-glucosamine 1-phosphate from alpha-D-glucosamine 6-phosphate (route I): step 1/2. Acetyltransferase involved in UDP-N-acetylglucosamine (UDP-GlcNAc) biosynthesis. UDP-GlcNAc is an essential metabolite that serves as an initial sugar donor for N-glycan synthesis and thus plays an important role in protein and lipid glycosylation. The chain is Glucosamine 6-phosphate N-acetyltransferase (GNA1) from Arabidopsis thaliana (Mouse-ear cress).